Reading from the N-terminus, the 152-residue chain is Probable ribose-5-phosphate isomerase B (152 aa).

Residue 12–13 (DH) participates in D-ribulose 5-phosphate binding. The Proton acceptor role is filled by Cys-70. 71–75 (GTGVG) is a D-ribulose 5-phosphate binding site. His-103 (proton donor) is an active-site residue. Residues Asp-104, Arg-114, Arg-137, and Arg-141 each coordinate D-ribulose 5-phosphate.

It belongs to the LacAB/RpiB family. In terms of assembly, homodimer.

It catalyses the reaction aldehydo-D-ribose 5-phosphate = D-ribulose 5-phosphate. Its pathway is carbohydrate degradation; pentose phosphate pathway; D-ribose 5-phosphate from D-ribulose 5-phosphate (non-oxidative stage): step 1/1. Catalyzes the interconversion of ribulose-5-P and ribose-5-P. This Mycoplasma pneumoniae (strain ATCC 29342 / M129 / Subtype 1) (Mycoplasmoides pneumoniae) protein is Probable ribose-5-phosphate isomerase B.